We begin with the raw amino-acid sequence, 374 residues long: Aclacinomycin 10-hydroxylase RdmB (374 aa).

S-adenosyl-L-methionine contacts are provided by Tyr171, Gly190, Glu213, Asp240, Phe241, and Ser255.

The protein belongs to the class I-like SAM-binding methyltransferase superfamily. Cation-independent O-methyltransferase family. Homodimer. Homotetramer in solution. Tetramers might not be very stable in solution.

The enzyme catalyses 15-demethylaclacinomycin T + AH2 + O2 = 10-decarboxymethylaclacinomycin T + A + CO2 + H2O. The catalysed reaction is 10-carboxy-13-deoxycarminomycin + AH2 + O2 + H(+) = 10-hydroxy-13-deoxycarminomycin + A + CO2 + H2O. It catalyses the reaction 10-hydroxy-13-deoxycarminomycin + S-adenosyl-L-methionine = 10-hydroxy-13-deoxydaunorubicin + S-adenosyl-L-homocysteine + H(+). It participates in antibiotic biosynthesis; rhodomycin biosynthesis. It functions in the pathway antibiotic biosynthesis; aclacinomycin biosynthesis. With respect to regulation, the hydroxylation reaction requires S-adenosyl-L-methionine (SAM) as a cofactor. S-adenosine-L-homocysteine and sinefungin (a SAM analog) can also support the decarboxylative hydroxylation activity with 10-carboxy-13-deoxycarminomycin as substrate. SAM and its analogs are considered an essential structural ligand to maintain ternary structural integrity and the proper binding mode and orientation of electron-rich substrates during decarboxylative hydroxylation of C-10 by RdmB. Functionally, involved in the biosynthesis of anthracyclines, an important group of aromatic polyketide antibiotics used in cancer chemotherapy. Acts as a 10-hydroxylase to catalyze a decarboxylative hydroxylation reaction on anthracyclines. During biosynthesis of rhodomycin, it catalyzes the removal of the carboxylic group at the C-10 position of 15-demethoxy-epsilon-rhodomycin coupled to hydroxylation at the same C-10 position to yield beta-rhodomycin. In vitro, can also catalyze the removal of the carboxylic group at the C-10 position of 15-demethoxyaclacinomycin T coupled to hydroxylation at the same C-10 position to yield 10-decarboxymethylaclacinomycin T. It can also use 10-carboxy-13-deoxycarminomycin, an analog of 15-demethoxy-epsilon-rhodomycin, to yield 10-hydroxy-13-deoxycarminomycin. In terms of biological role, in addition to its hydroxylation activity, it can act in vitro as a S-adenosyl-L-methionine-dependent O-methyltransferase and catalyze the 4-O-methylation of 10-hydroxy-13-deoxycarminomycin to 10-hydroxy-13-deoxydaunorubicin. The triglycosyl group of anthracyclines prevents the methylation reaction. The polypeptide is Aclacinomycin 10-hydroxylase RdmB (Streptomyces purpurascens).